Consider the following 409-residue polypeptide: TM2 domain-containing protein ZK858.5 (409 aa).

The TM2 domain maps to 8 to 55 (VKPWIVRIILIVGGLFGAHRLYLKQVPEAFVFFSTLGVLLIGWLYDSF). 6 helical membrane-spanning segments follow: residues 10–30 (PWIV…RLYL), 37–57 (FVFF…SFMF), 104–124 (VLYG…TFGW), 127–147 (INLI…IYII), 168–190 (MFIM…AIVS), and 209–229 (HFLF…LGCS).

Belongs to the TM2 family.

It localises to the membrane. This Caenorhabditis elegans protein is TM2 domain-containing protein ZK858.5.